Here is a 467-residue protein sequence, read N- to C-terminus: Probable glycerol-3-phosphate dehydrogenase [NAD(+)] 2, cytosolic (467 aa).

NAD(+) is bound by residues 47–52 (GAGAWG), K195, and A234. Substrate is bound at residue K195. The active-site Proton acceptor is the K284. R346 and Q374 together coordinate NAD(+). Position 346–347 (346–347 (RN)) interacts with substrate.

The protein belongs to the NAD-dependent glycerol-3-phosphate dehydrogenase family.

The protein localises to the cytoplasm. Its subcellular location is the cytosol. The catalysed reaction is sn-glycerol 3-phosphate + NAD(+) = dihydroxyacetone phosphate + NADH + H(+). In terms of biological role, may be involved in cell redox homeostasis. The polypeptide is Probable glycerol-3-phosphate dehydrogenase [NAD(+)] 2, cytosolic (Oryza sativa subsp. japonica (Rice)).